Consider the following 26-residue polypeptide: Ribulose bisphosphate carboxylase large chain (26 aa).

Positions 1–2 are excised as a propeptide; that stretch reads MS. N-acetylproline is present on proline 3.

The protein belongs to the RuBisCO large chain family. Type I subfamily. In terms of assembly, heterohexadecamer of 8 large chains and 8 small chains.

Its subcellular location is the plastid. It is found in the chloroplast. It catalyses the reaction 2 (2R)-3-phosphoglycerate + 2 H(+) = D-ribulose 1,5-bisphosphate + CO2 + H2O. The catalysed reaction is D-ribulose 1,5-bisphosphate + O2 = 2-phosphoglycolate + (2R)-3-phosphoglycerate + 2 H(+). Its function is as follows. RuBisCO catalyzes two reactions: the carboxylation of D-ribulose 1,5-bisphosphate, the primary event in carbon dioxide fixation, as well as the oxidative fragmentation of the pentose substrate in the photorespiration process. Both reactions occur simultaneously and in competition at the same active site. This chain is Ribulose bisphosphate carboxylase large chain (rbcL), found in Vicia faba (Broad bean).